Reading from the N-terminus, the 264-residue chain is Phosphatidylglycerol--prolipoprotein diacylglyceryl transferase (264 aa).

Helical transmembrane passes span 17–37, 57–77, 89–109, and 118–138; these read LAIH…YLLG, LIFY…VLFY, IAFL…VILV, and GVSF…GLGA. Arg-140 serves as a coordination point for a 1,2-diacyl-sn-glycero-3-phospho-(1'-sn-glycerol). The next 3 helical transmembrane spans lie at 173–193, 201–221, and 237–257; these read PSQL…LWWF, GQVS…VEFT, and MGQW…VLTA.

The protein belongs to the Lgt family.

Its subcellular location is the cell inner membrane. The catalysed reaction is L-cysteinyl-[prolipoprotein] + a 1,2-diacyl-sn-glycero-3-phospho-(1'-sn-glycerol) = an S-1,2-diacyl-sn-glyceryl-L-cysteinyl-[prolipoprotein] + sn-glycerol 1-phosphate + H(+). It functions in the pathway protein modification; lipoprotein biosynthesis (diacylglyceryl transfer). Functionally, catalyzes the transfer of the diacylglyceryl group from phosphatidylglycerol to the sulfhydryl group of the N-terminal cysteine of a prolipoprotein, the first step in the formation of mature lipoproteins. This chain is Phosphatidylglycerol--prolipoprotein diacylglyceryl transferase, found in Bordetella avium (strain 197N).